The sequence spans 374 residues: Phospho-2-dehydro-3-deoxyheptonate aldolase AMT16 (374 aa).

It belongs to the class-I DAHP synthase family.

The enzyme catalyses D-erythrose 4-phosphate + phosphoenolpyruvate + H2O = 7-phospho-2-dehydro-3-deoxy-D-arabino-heptonate + phosphate. The protein operates within mycotoxin biosynthesis. Functionally, nonribosomal peptide synthetase; part of the gene clusters that mediate the biosynthesis of AM-toxins, host-selective toxins (HSTs) causing Alternaria blotch on apple, a worldwide distributed disease. AM-toxins are cyclic depsipeptides containing the 3 residues 2-hydroxy-isovaleric acid (2-HIV), dehydroalanine, L-alanine which are common for all 3 AM-toxins I to III. The fourth precursor is L-alpha-amino-methoxyphenyl-valeric acid (L-Amv) for AM-toxin I, L-alpha-amino-phenyl-valeric acid (L-Apv) for AM-toxin II, and L-alpha-amino-hydroxyphenyl-valeric acid (L-Ahv) for AM-toxin III. AM-toxins have two target sites for affecting susceptible apple cells; they cause invagination of the plasma membrane and electrolyte loss and chloroplast disorganization. The non-ribosomal peptide synthetase AMT1 contains 4 catalytic modules and is responsible for activation of each residue in AM-toxin. The aldo-keto reductase AMT2 catalyzes the conversion of 2-keto-isovaleric acid (2-KIV) to 2-hydroxy-isovaleric acid (2-HIV), one of the precursor residues incorporated by AMT1 during AM-toxin biosynthesis, by reduction of its ketone to an alcohol. The cytochrome P450 monooxygenase AMT3 and the thioesterase AMT4 are also important for AM-toxin production, but their exact function within the AM-toxin biosynthesis are not known yet. Up to 21 proteins (including AMT1 to AMT4) are predicted to be involved in AM-toxin biosynthesis since their expression ishighly up-regulated in AM-toxin-producing cultures. This Alternaria alternata (Alternaria rot fungus) protein is Phospho-2-dehydro-3-deoxyheptonate aldolase AMT16.